The sequence spans 102 residues: Large ribosomal subunit protein uL24 (102 aa).

The protein belongs to the universal ribosomal protein uL24 family. In terms of assembly, part of the 50S ribosomal subunit.

One of two assembly initiator proteins, it binds directly to the 5'-end of the 23S rRNA, where it nucleates assembly of the 50S subunit. Its function is as follows. One of the proteins that surrounds the polypeptide exit tunnel on the outside of the subunit. This is Large ribosomal subunit protein uL24 from Allorhizobium ampelinum (strain ATCC BAA-846 / DSM 112012 / S4) (Agrobacterium vitis (strain S4)).